Consider the following 551-residue polypeptide: Membrane protein insertase YidC (551 aa).

The helical transmembrane segment at 6–26 (YFLWGALFISGYLLFLQWSQD) threads the bilayer. Residues 34 to 50 (SVAQSTQSQSETNSQMS) show a composition bias toward low complexity. Positions 34–68 (SVAQSTQSQSETNSQMSDDLPMATQSTTEANAEIP) are disordered. The span at 56 to 68 (ATQSTTEANAEIP) shows a compositional bias: polar residues. Transmembrane regions (helical) follow at residues 340–360 (TVDY…LTLI), 363–383 (FVIN…AIFF), 433–453 (LGGC…YWVL), 464–484 (FFLW…PILM), and 509–529 (IMPV…VLYW).

The protein belongs to the OXA1/ALB3/YidC family. Type 1 subfamily. Interacts with the Sec translocase complex via SecD. Specifically interacts with transmembrane segments of nascent integral membrane proteins during membrane integration.

The protein resides in the cell inner membrane. Functionally, required for the insertion and/or proper folding and/or complex formation of integral membrane proteins into the membrane. Involved in integration of membrane proteins that insert both dependently and independently of the Sec translocase complex, as well as at least some lipoproteins. Aids folding of multispanning membrane proteins. The protein is Membrane protein insertase YidC of Marinomonas sp. (strain MWYL1).